The following is a 206-amino-acid chain: Probable chemoreceptor glutamine deamidase CheD (206 aa).

It belongs to the CheD family.

The enzyme catalyses L-glutaminyl-[protein] + H2O = L-glutamyl-[protein] + NH4(+). Its function is as follows. Probably deamidates glutamine residues to glutamate on methyl-accepting chemotaxis receptors (MCPs), playing an important role in chemotaxis. The polypeptide is Probable chemoreceptor glutamine deamidase CheD (Laribacter hongkongensis (strain HLHK9)).